A 132-amino-acid polypeptide reads, in one-letter code: Translation initiation factor 5A (132 aa).

The residue at position 36 (lysine 36) is a Hypusine.

Belongs to the eIF-5A family.

It localises to the cytoplasm. Its function is as follows. Functions by promoting the formation of the first peptide bond. The sequence is that of Translation initiation factor 5A (eIF5A) from Thermofilum pendens (strain DSM 2475 / Hrk 5).